The chain runs to 213 residues: uncharacterized protein (213 aa).

This is an uncharacterized protein from Aquifex aeolicus (strain VF5).